Reading from the N-terminus, the 647-residue chain is MSTTSSVRVRLAFVALLSATTFYCIHKYRRLKHLKNLSLNPSSTLKASRGKIFFISQTGTAKALAQRLHELCASNDIAFDIVDPHSYEPEDLPKETLVLFIASTWDGGKPPKNGEFLVNWLGESAEDFRVGSLLLSDCKFAVFGVGSRAYGESYNAVAKELSSRMIGLGGLEMIPVGEGDVDDGELDRAFQDWCDGVIRVLKGGSAQETNGVSQQIGAVEDDLEYYDSTDEEDEDNDADGGIVDLEDIAGKAPSKRNGVVKVTKVDGKKEMVTPVIRASLTKQGYKIIGSHSGVKICRWTKSQLRGRGGCYKHSFYGIESHRCMETTPSLACANKCVFCWRHHTNPVGKSWQWKMDEPSVIVKGALDLHKNMIKQMKGVPGVTPEKLQEGLNPRHCALSLVGEPIMYPEINALVDELHGRRISTFLVTNAQFPEKILMMKPITQLYVSVDAATKESLKAIDRPLFADFWERFIDSLKALQEKQQRTVYRLTLVKGWNTEELDAYFNLFSIGKPDFIEIKGVTYCGSSATSKLTMENVPWHTDVKAFSEALSLKSNGEYEVACEHAHSCCVLLGRTEKFKVDGKWFTWIDYEKFHDLVASGEPFTSTDYMAQTPSWAVYGAQEGGFDPGQLRYKKERNHPPKPQAVLA.

One can recognise a Flavodoxin-like domain in the interval 50 to 198 (GKIFFISQTG…AFQDWCDGVI (149 aa)). Residues 56–60 (SQTGT) and 142–174 (VFGV…LEMI) each bind FMN. The Radical SAM core domain maps to 316–559 (YGIESHRCME…LSLKSNGEYE (244 aa)). Positions 332, 336, and 339 each coordinate [4Fe-4S] cluster.

This sequence belongs to the TYW1 family. The cofactor is [4Fe-4S] cluster.

It carries out the reaction N(1)-methylguanosine(37) in tRNA(Phe) + pyruvate + S-adenosyl-L-methionine = 4-demethylwyosine(37) in tRNA(Phe) + 5'-deoxyadenosine + L-methionine + CO2 + H2O. Its pathway is tRNA modification; wybutosine-tRNA(Phe) biosynthesis. Probable component of the wybutosine biosynthesis pathway. Wybutosine is a hyper modified guanosine with a tricyclic base found at the 3'-position adjacent to the anticodon of eukaryotic phenylalanine tRNA. Catalyzes the condensation of N-methylguanine with 2 carbon atoms from pyruvate to form the tricyclic 4-demethylwyosine, an intermediate in wybutosine biosynthesis. The chain is S-adenosyl-L-methionine-dependent tRNA 4-demethylwyosine synthase (TYW1) from Arabidopsis thaliana (Mouse-ear cress).